Here is a 226-residue protein sequence, read N- to C-terminus: ATP synthase F(0) complex subunit a (226 aa).

Transmembrane regions (helical) follow at residues 12-32 (PTMM…ILFP), 68-88 (WALM…LGLL), 97-117 (QLSM…ITGF), 138-158 (IPML…ALAV), 164-184 (ITAG…LMDI), and 189-209 (AFIT…VALI).

This sequence belongs to the ATPase A chain family. Component of the ATP synthase complex composed at least of ATP5F1A/subunit alpha, ATP5F1B/subunit beta, ATP5MC1/subunit c (homooctomer), MT-ATP6/subunit a, MT-ATP8/subunit 8, ATP5ME/subunit e, ATP5MF/subunit f, ATP5MG/subunit g, ATP5MK/subunit k, ATP5MJ/subunit j, ATP5F1C/subunit gamma, ATP5F1D/subunit delta, ATP5F1E/subunit epsilon, ATP5PF/subunit F6, ATP5PB/subunit b, ATP5PD/subunit d, ATP5PO/subunit OSCP. ATP synthase complex consists of a soluble F(1) head domain (subunits alpha(3) and beta(3)) - the catalytic core - and a membrane F(0) domain - the membrane proton channel (subunits c, a, 8, e, f, g, k and j). These two domains are linked by a central stalk (subunits gamma, delta, and epsilon) rotating inside the F1 region and a stationary peripheral stalk (subunits F6, b, d, and OSCP). Interacts with DNAJC30; interaction is direct.

It is found in the mitochondrion inner membrane. It carries out the reaction H(+)(in) = H(+)(out). Subunit a, of the mitochondrial membrane ATP synthase complex (F(1)F(0) ATP synthase or Complex V) that produces ATP from ADP in the presence of a proton gradient across the membrane which is generated by electron transport complexes of the respiratory chain. ATP synthase complex consist of a soluble F(1) head domain - the catalytic core - and a membrane F(1) domain - the membrane proton channel. These two domains are linked by a central stalk rotating inside the F(1) region and a stationary peripheral stalk. During catalysis, ATP synthesis in the catalytic domain of F(1) is coupled via a rotary mechanism of the central stalk subunits to proton translocation. With the subunit c (ATP5MC1), forms the proton-conducting channel in the F(0) domain, that contains two crucial half-channels (inlet and outlet) that facilitate proton movement from the mitochondrial intermembrane space (IMS) into the matrix. Protons are taken up via the inlet half-channel and released through the outlet half-channel, following a Grotthuss mechanism. This Halichoerus grypus (Gray seal) protein is ATP synthase F(0) complex subunit a.